We begin with the raw amino-acid sequence, 280 residues long: Large ribosomal subunit protein uL2 (280 aa).

Residues 226 to 280 (NPIDHPHGGGEGRTSGGRHPVTPWGKPTKGAKTRNKKKASSQLIIRSRHAKKKGR) form a disordered region. 2 stretches are compositionally biased toward basic residues: residues 254 to 264 (KGAKTRNKKKA) and 271 to 280 (RSRHAKKKGR).

It belongs to the universal ribosomal protein uL2 family. Part of the 50S ribosomal subunit. Forms a bridge to the 30S subunit in the 70S ribosome.

In terms of biological role, one of the primary rRNA binding proteins. Required for association of the 30S and 50S subunits to form the 70S ribosome, for tRNA binding and peptide bond formation. It has been suggested to have peptidyltransferase activity; this is somewhat controversial. Makes several contacts with the 16S rRNA in the 70S ribosome. The chain is Large ribosomal subunit protein uL2 from Roseobacter denitrificans (strain ATCC 33942 / OCh 114) (Erythrobacter sp. (strain OCh 114)).